The chain runs to 175 residues: NADH-ubiquinone oxidoreductase chain 6 (175 aa).

Transmembrane regions (helical) follow at residues 1–21 (MMYTVFVMSVLFVVGFVGVSS), 24–44 (SPVYGGLGLVASGGVGCGIVV), 46–66 (FGGSFLGLMVFLVYLGGMMVV), 86–106 (IVVLGALVGGLLMEGAAVVYL), and 149–169 (YGCWFMVMSGWMLFISVFIVI).

Belongs to the complex I subunit 6 family. As to quaternary structure, core subunit of respiratory chain NADH dehydrogenase (Complex I) which is composed of 45 different subunits.

It is found in the mitochondrion inner membrane. It catalyses the reaction a ubiquinone + NADH + 5 H(+)(in) = a ubiquinol + NAD(+) + 4 H(+)(out). Its function is as follows. Core subunit of the mitochondrial membrane respiratory chain NADH dehydrogenase (Complex I) which catalyzes electron transfer from NADH through the respiratory chain, using ubiquinone as an electron acceptor. Essential for the catalytic activity and assembly of complex I. This chain is NADH-ubiquinone oxidoreductase chain 6 (MT-ND6), found in Dugong dugon (Dugong).